The primary structure comprises 293 residues: Diaminopimelate epimerase (293 aa).

Substrate contacts are provided by Asn13, Gln46, and Asn66. The active-site Proton donor is Cys75. Residues 76 to 77 (GN), Asn162, Asn195, and 213 to 214 (ER) each bind substrate. Cys222 functions as the Proton acceptor in the catalytic mechanism. 223–224 (GT) provides a ligand contact to substrate.

It belongs to the diaminopimelate epimerase family. In terms of assembly, homodimer.

The protein resides in the cytoplasm. The enzyme catalyses (2S,6S)-2,6-diaminopimelate = meso-2,6-diaminopimelate. It participates in amino-acid biosynthesis; L-lysine biosynthesis via DAP pathway; DL-2,6-diaminopimelate from LL-2,6-diaminopimelate: step 1/1. In terms of biological role, catalyzes the stereoinversion of LL-2,6-diaminopimelate (L,L-DAP) to meso-diaminopimelate (meso-DAP), a precursor of L-lysine and an essential component of the bacterial peptidoglycan. This Psychrobacter sp. (strain PRwf-1) protein is Diaminopimelate epimerase.